Here is a 467-residue protein sequence, read N- to C-terminus: MEYMSTGSDEKEEIDLLINHLNVSEVLDIMENLYASEEPAVYEPSLMTMCPDSNQNKEHSESLLRSGQEVPWLSSVRYGTVEDLLAFANHISNTTKHFYRCRPQESGILLNMVISPQNGRYQIDSDVLLVPWKLTYRSIGSGFVPRGAFGKVYLAQDMKTKKRMACKLIPVDQFKPSDVEIQACFRHENIAELYGAVLWGDTVHLFMEAGEGGSVLEKLESCGPMREFEIIWVTKHVLKGLDFLHSKKVIHHDIKPSNIVFMSTKAVLVDFGLSVQMTEDVYLPKDLRGTEIYMSPEVILCRGHSTKADIYSLGATLIHMQTGTPPWVKRYPRSAYPSYLYIIHKQAPPLEDIAGDCSPGMRELIEAALERNPNHRPKAADLLKHEALNPPREDQPRCQSLDSALFDRKRLLSRKELELPENIADSSCTGSTEESEVLRRQRSLYIDLGALAGYFNIVRGPPTLEYG.

Thr-80 carries the post-translational modification Phosphothreonine. Phosphoserine is present on residues Ser-138 and Ser-141. Residues 144–152 (VPRGAFGKV) and Lys-167 contribute to the ATP site. Residues 146–388 (RGAFGKVYLA…AADLLKHEAL (243 aa)) enclose the Protein kinase domain. The Proton acceptor role is filled by Asp-253. At Thr-290 the chain carries Phosphothreonine. Phosphoserine is present on residues Ser-400 and Ser-443.

It belongs to the protein kinase superfamily. STE Ser/Thr protein kinase family. MAP kinase kinase kinase subfamily. In terms of assembly, forms a ternary complex with NFKB1/p105 and TNIP2. Interacts with NFKB1; the interaction increases the stability of MAP3K8 but inhibits its MEK phosphorylation activity, whereas loss of interaction following LPS stimulation leads to its degradation. Interacts with CD40 and TRAF6; the interaction is required for ERK activation. Interacts with KSR2; the interaction inhibits ERK and NF-kappa-B activation. Mg(2+) serves as cofactor. Post-translationally, autophosphorylated. Expressed in spleen, thymus, liver and lung.

The protein resides in the cytoplasm. The enzyme catalyses L-seryl-[protein] + ATP = O-phospho-L-seryl-[protein] + ADP + H(+). It carries out the reaction L-threonyl-[protein] + ATP = O-phospho-L-threonyl-[protein] + ADP + H(+). Required for lipopolysaccharide (LPS)-induced, TLR4-mediated activation of the MAPK/ERK pathway in macrophages, thus being critical for production of the pro-inflammatory cytokine TNF-alpha (TNF) during immune responses. Involved in the regulation of T-helper cell differentiation and IFNG expression in T-cells. Involved in mediating host resistance to bacterial infection through negative regulation of type I interferon (IFN) production. Transduces CD40 and TNFRSF1A signals that activate ERK in B-cells and macrophages, and thus may play a role in the regulation of immunoglobulin production. May also play a role in the transduction of TNF signals that activate JNK and NF-kappa-B in some cell types. In adipocytes, activates MAPK/ERK pathway in an IKBKB-dependent manner in response to IL1B and TNF, but not insulin, leading to induction of lipolysis. Plays a role in the cell cycle. In Rattus norvegicus (Rat), this protein is Mitogen-activated protein kinase kinase kinase 8 (Map3k8).